The sequence spans 148 residues: Large ribosomal subunit protein bL9 (148 aa).

The protein belongs to the bacterial ribosomal protein bL9 family.

Binds to the 23S rRNA. This Acinetobacter baumannii (strain AB307-0294) protein is Large ribosomal subunit protein bL9.